The primary structure comprises 808 residues: Tegument protein UL47 homolog (808 aa).

Disordered stretches follow at residues M1–Q21 and P77–E266. Over residues D83 to R92 the composition is skewed to basic and acidic residues. A compositionally biased stretch (basic residues) spans S133–S160. A compositionally biased stretch (polar residues) spans R162 to I171. Positions R197–P214 are enriched in basic residues. Over residues P235 to P259 the composition is skewed to basic and acidic residues.

This sequence belongs to the alphaherpesvirinae HHV-1 UL47 family. Interacts with US3 kinase. Interacts with UL31 and UL34; these interactions seem important for efficient virion nuclear egress. Interacts with UL41/VHS. Phosphorylated by US3. This phosphorylation is required for proper nuclear localization. Post-translationally, O-glycosylated.

The protein localises to the virion tegument. It is found in the host nucleus. The protein resides in the host cytoplasm. Its function is as follows. Tegument protein that can bind to various RNA transcripts. Plays a role in the attenuation of selective viral and cellular mRNA degradation by modulating the activity of host shutoff RNase UL41/VHS. Also plays a role in the primary envelopment of virions in the perinuclear space, probably by interacting with two nuclear egress proteins UL31 and UL34. Plays an important role in the splicing of glycoprotein/gC transcripts and thereby participates in bird-to-bird viral transmission. The chain is Tegument protein UL47 homolog (MDV060) from Gallus gallus (Chicken).